We begin with the raw amino-acid sequence, 394 residues long: Acetate kinase (394 aa).

Position 10 (Asn10) interacts with Mg(2+). Lys17 contributes to the ATP binding site. Substrate is bound at residue Arg87. The active-site Proton donor/acceptor is Asp144. ATP is bound by residues 204-208 (HLGNG), 279-281 (DMR), and 327-331 (GIGEN). Residue Glu381 participates in Mg(2+) binding.

It belongs to the acetokinase family. As to quaternary structure, homodimer. Requires Mg(2+) as cofactor. The cofactor is Mn(2+).

Its subcellular location is the cytoplasm. It carries out the reaction acetate + ATP = acetyl phosphate + ADP. It functions in the pathway metabolic intermediate biosynthesis; acetyl-CoA biosynthesis; acetyl-CoA from acetate: step 1/2. Functionally, catalyzes the formation of acetyl phosphate from acetate and ATP. Can also catalyze the reverse reaction. The polypeptide is Acetate kinase (Ectopseudomonas mendocina (strain ymp) (Pseudomonas mendocina)).